The sequence spans 291 residues: Phosphoribulokinase (291 aa).

12–20 (GSSGAGTTS) serves as a coordination point for ATP.

This sequence belongs to the phosphoribulokinase family. In terms of assembly, homooctamer.

It catalyses the reaction D-ribulose 5-phosphate + ATP = D-ribulose 1,5-bisphosphate + ADP + H(+). The protein operates within carbohydrate biosynthesis; Calvin cycle. This chain is Phosphoribulokinase (cbbP), found in Xanthobacter flavus.